The following is a 239-amino-acid chain: Sugar fermentation stimulation protein homolog (239 aa).

The protein belongs to the SfsA family.

The polypeptide is Sugar fermentation stimulation protein homolog (Maridesulfovibrio salexigens (strain ATCC 14822 / DSM 2638 / NCIMB 8403 / VKM B-1763) (Desulfovibrio salexigens)).